The following is a 37-amino-acid chain: Large ribosomal subunit protein bL36 (37 aa).

Belongs to the bacterial ribosomal protein bL36 family.

This is Large ribosomal subunit protein bL36 from Vesicomyosocius okutanii subsp. Calyptogena okutanii (strain HA).